A 411-amino-acid polypeptide reads, in one-letter code: LL-diaminopimelate aminotransferase (411 aa).

The substrate site is built by tyrosine 15 and glycine 42. Residues tyrosine 72, 108–109 (AK), tyrosine 132, asparagine 188, tyrosine 219, and 247–249 (SFS) each bind pyridoxal 5'-phosphate. Residues lysine 109, tyrosine 132, and asparagine 188 each coordinate substrate. Lysine 250 is modified (N6-(pyridoxal phosphate)lysine). Positions 258 and 293 each coordinate pyridoxal 5'-phosphate. Residues asparagine 293 and arginine 389 each coordinate substrate.

The protein belongs to the class-I pyridoxal-phosphate-dependent aminotransferase family. LL-diaminopimelate aminotransferase subfamily. In terms of assembly, homodimer. Requires pyridoxal 5'-phosphate as cofactor.

The enzyme catalyses (2S,6S)-2,6-diaminopimelate + 2-oxoglutarate = (S)-2,3,4,5-tetrahydrodipicolinate + L-glutamate + H2O + H(+). It functions in the pathway amino-acid biosynthesis; L-lysine biosynthesis via DAP pathway; LL-2,6-diaminopimelate from (S)-tetrahydrodipicolinate (aminotransferase route): step 1/1. In terms of biological role, involved in the synthesis of meso-diaminopimelate (m-DAP or DL-DAP), required for both lysine and peptidoglycan biosynthesis. Catalyzes the direct conversion of tetrahydrodipicolinate to LL-diaminopimelate. Is also able to catalyze the reverse reaction in vitro, i.e. the transamination of LL-diaminopimelate with 2-oxoglutarate to produce tetrahydrodipicolinate and glutamate. Can also use m-DAP instead of LL-DAP as the amino-group donor, and oxaloacetate or pyruvate as the amino-group acceptor. In Desulfitobacterium hafniense (strain DSM 10664 / DCB-2), this protein is LL-diaminopimelate aminotransferase.